The following is a 358-amino-acid chain: Plastoglobulin-1, chloroplastic (358 aa).

The transit peptide at 1–47 (MALLSSTLRAPLVFSKNPKPVSLSSLHSRIYLSPRSPRFPSLRFISA) directs the protein to the chloroplast. The tract at residues 48–114 (AGDTGDAEKP…NDAGNGTPTF (67 aa)) is disordered.

This sequence belongs to the PAP/fibrillin family.

It localises to the plastid. Its subcellular location is the chloroplast. Its function is as follows. May form together with other plastoglobulins a coat on the surface of the lipoprotein particle. The coat may contain receptors for attachment to the thylakoid membrane as well as regulatory proteins that may function in the transfer of lipids to and from the thylakoid membranes. The chain is Plastoglobulin-1, chloroplastic (PG1) from Pisum sativum (Garden pea).